The sequence spans 356 residues: Phosphatidylglycerol--prolipoprotein diacylglyceryl transferase (356 aa).

Transmembrane regions (helical) follow at residues 24 to 44 (IKWY…LACV), 59 to 79 (WFVF…SFII), 103 to 123 (LAIE…FPLV), and 144 to 164 (VSMW…QIIG). An a 1,2-diacyl-sn-glycero-3-phospho-(1'-sn-glycerol)-binding site is contributed by Arg165. The next 2 helical transmembrane spans lie at 209 to 229 (PFFL…YIGG) and 265 to 285 (FATS…LLVC).

The protein belongs to the Lgt family.

The protein localises to the cell membrane. It carries out the reaction L-cysteinyl-[prolipoprotein] + a 1,2-diacyl-sn-glycero-3-phospho-(1'-sn-glycerol) = an S-1,2-diacyl-sn-glyceryl-L-cysteinyl-[prolipoprotein] + sn-glycerol 1-phosphate + H(+). The protein operates within protein modification; lipoprotein biosynthesis (diacylglyceryl transfer). Catalyzes the transfer of the diacylglyceryl group from phosphatidylglycerol to the sulfhydryl group of the N-terminal cysteine of a prolipoprotein, the first step in the formation of mature lipoproteins. In Malacoplasma penetrans (strain HF-2) (Mycoplasma penetrans), this protein is Phosphatidylglycerol--prolipoprotein diacylglyceryl transferase.